We begin with the raw amino-acid sequence, 364 residues long: Cobalt-precorrin-5B C(1)-methyltransferase (364 aa).

It belongs to the CbiD family.

It catalyses the reaction Co-precorrin-5B + S-adenosyl-L-methionine = Co-precorrin-6A + S-adenosyl-L-homocysteine. The protein operates within cofactor biosynthesis; adenosylcobalamin biosynthesis; cob(II)yrinate a,c-diamide from sirohydrochlorin (anaerobic route): step 6/10. Its function is as follows. Catalyzes the methylation of C-1 in cobalt-precorrin-5B to form cobalt-precorrin-6A. The chain is Cobalt-precorrin-5B C(1)-methyltransferase from Pseudomonas entomophila (strain L48).